A 560-amino-acid polypeptide reads, in one-letter code: MVGKSKNRAHKNIRARSCLRCRRRKVKCDRQYPCSRCKESEESCTYGVNEQAVQLLEEPLSRPITRETDSSAHQETRTRLEENNLPKTQKFGFVDWKTILKSSAEFQGIVQRDPESRLREALETDPKLKKRLECILETIPPWDVCESLLKVYANTFNVTNYILDFEQADKLLSDLKNSNHVFATSIILIVTAIAVALSLESFPSNIERYFSAVNHSAIELSDALNSKIDDFLNEEVIFRLWRNIDRIRLHAIRAQLCMRNQFRSMNTDLCYAIHYACFVNPIFQNTDTEYEANMEVWLSICEIDALECVLRSCQPWVQHDIYGKLLSQRKMGSDVISYEFHSLLGQLLTCGLEIYKAIHTSTVNEFVNSIQFYESQLSLVLMEIESKFSNIDGSDIHFRYLFLKTVFWTVRKNLYQGFITVSRTLVPNYPDIVQKLGQTSIQLSRLISNSMDCFEKYGWLKAMLILVTHTFLIIHVCSERGYDVPKDFWNVTASVQATLEEKKYPGIVWERIHYVLNIYTTINSVEPELSEDHGDLDDQNLFQVFTDIFDFNFNFPLPNL.

The zn(2)-C6 fungal-type DNA-binding region spans 18 to 44 (CLRCRRRKVKCDRQYPCSRCKESEESC). A disordered region spans residues 60-80 (LSRPITRETDSSAHQETRTRL). Positions 64–80 (ITRETDSSAHQETRTRL) are enriched in basic and acidic residues. A helical membrane pass occupies residues 182 to 202 (FATSIILIVTAIAVALSLESF).

Its subcellular location is the nucleus membrane. This is an uncharacterized protein from Schizosaccharomyces pombe (strain 972 / ATCC 24843) (Fission yeast).